The sequence spans 414 residues: Ankyrin repeat domain-containing protein 10 (414 aa).

5 ANK repeats span residues 18 to 47, 54 to 83, 88 to 117, 121 to 150, and 154 to 187; these read TLRF…RSDL, YGWT…SVNA, FAQT…NINK, VGET…QIDL, and SGLT…RYYS. Positions 310–332 are disordered; that stretch reads GVTSPSRHRIHTSNGTEEPEKAM.

The sequence is that of Ankyrin repeat domain-containing protein 10 (ANKRD10) from Gallus gallus (Chicken).